Reading from the N-terminus, the 490-residue chain is ATP synthase subunit beta, chloroplastic (490 aa).

Position 170–177 (170–177 (GGAGVGKT)) interacts with ATP.

The protein belongs to the ATPase alpha/beta chains family. In terms of assembly, F-type ATPases have 2 components, CF(1) - the catalytic core - and CF(0) - the membrane proton channel. CF(1) has five subunits: alpha(3), beta(3), gamma(1), delta(1), epsilon(1). CF(0) has four main subunits: a(1), b(1), b'(1) and c(9-12).

The protein resides in the plastid. It localises to the chloroplast thylakoid membrane. The catalysed reaction is ATP + H2O + 4 H(+)(in) = ADP + phosphate + 5 H(+)(out). Its function is as follows. Produces ATP from ADP in the presence of a proton gradient across the membrane. The catalytic sites are hosted primarily by the beta subunits. The protein is ATP synthase subunit beta, chloroplastic of Ipomoea aquatica (Water spinach).